The primary structure comprises 231 residues: Large ribosomal subunit protein uL1 (231 aa).

This sequence belongs to the universal ribosomal protein uL1 family. Part of the 50S ribosomal subunit.

Binds directly to 23S rRNA. The L1 stalk is quite mobile in the ribosome, and is involved in E site tRNA release. Its function is as follows. Protein L1 is also a translational repressor protein, it controls the translation of the L11 operon by binding to its mRNA. In Chromobacterium violaceum (strain ATCC 12472 / DSM 30191 / JCM 1249 / CCUG 213 / NBRC 12614 / NCIMB 9131 / NCTC 9757 / MK), this protein is Large ribosomal subunit protein uL1.